A 207-amino-acid chain; its full sequence is Uracil phosphoribosyltransferase (207 aa).

Residues Arg-77, Arg-102, and Asp-129 to Ser-137 contribute to the 5-phospho-alpha-D-ribose 1-diphosphate site. Residues Ile-192 and Gly-197–Ala-199 each bind uracil. Residue Asp-198 participates in 5-phospho-alpha-D-ribose 1-diphosphate binding.

The protein belongs to the UPRTase family. The cofactor is Mg(2+).

The enzyme catalyses UMP + diphosphate = 5-phospho-alpha-D-ribose 1-diphosphate + uracil. The protein operates within pyrimidine metabolism; UMP biosynthesis via salvage pathway; UMP from uracil: step 1/1. Its activity is regulated as follows. Allosterically activated by GTP. Its function is as follows. Catalyzes the conversion of uracil and 5-phospho-alpha-D-ribose 1-diphosphate (PRPP) to UMP and diphosphate. This is Uracil phosphoribosyltransferase from Mycobacterium marinum (strain ATCC BAA-535 / M).